The following is a 212-amino-acid chain: Pyridoxine/pyridoxamine 5'-phosphate oxidase (212 aa).

Substrate contacts are provided by residues 8–11 and Lys66; that span reads RRNY. Residues 61–66, 76–77, Arg82, Lys83, and Gln105 contribute to the FMN site; these read RIVLLK and FT. The substrate site is built by Tyr123, Arg127, and Ser131. Residues 140-141 and Trp184 contribute to the FMN site; that span reads QS. Residue 190–192 coordinates substrate; the sequence is RLH. Arg194 serves as a coordination point for FMN.

Belongs to the pyridoxamine 5'-phosphate oxidase family. In terms of assembly, homodimer. It depends on FMN as a cofactor.

The enzyme catalyses pyridoxamine 5'-phosphate + O2 + H2O = pyridoxal 5'-phosphate + H2O2 + NH4(+). It carries out the reaction pyridoxine 5'-phosphate + O2 = pyridoxal 5'-phosphate + H2O2. It participates in cofactor metabolism; pyridoxal 5'-phosphate salvage; pyridoxal 5'-phosphate from pyridoxamine 5'-phosphate: step 1/1. It functions in the pathway cofactor metabolism; pyridoxal 5'-phosphate salvage; pyridoxal 5'-phosphate from pyridoxine 5'-phosphate: step 1/1. In terms of biological role, catalyzes the oxidation of either pyridoxine 5'-phosphate (PNP) or pyridoxamine 5'-phosphate (PMP) into pyridoxal 5'-phosphate (PLP). The sequence is that of Pyridoxine/pyridoxamine 5'-phosphate oxidase from Cupriavidus metallidurans (strain ATCC 43123 / DSM 2839 / NBRC 102507 / CH34) (Ralstonia metallidurans).